The sequence spans 382 residues: Methenyltetrahydrofolate synthase domain-containing protein (382 aa).

The region spanning 306-382 (TTVYLSDIPP…QAKCVSSQKM (77 aa)) is the RRM domain.

The chain is Methenyltetrahydrofolate synthase domain-containing protein (mthfsd) from Danio rerio (Zebrafish).